Reading from the N-terminus, the 284-residue chain is Tegument protein VP22 (284 aa).

Disordered regions lie at residues 1 to 126 and 239 to 284; these read MSYY…WSID and LYAS…SRRR. The span at 74–83 shows a compositional bias: basic and acidic residues; that stretch reads SRDDDDRRQP. Residues 94-108 are compositionally biased toward basic residues; it reads ERRKSQTTVTTRRKT. Positions 115–126 are enriched in polar residues; that stretch reads KSSNSNGPWSID.

The protein belongs to the alphaherpesvirinae VP22 tegument protein family. As to quaternary structure, interacts with gE (via C-terminus); this interaction is necessary for the recruitment of VP22 to the Golgi and its packaging into virions. Interacts with gM (via C-terminus). Interacts with VP16; this interaction allows the formation of a tripartite complex composed of VP16, VP22 and UL41/VHS. Interacts with the capsid-binding protein UL16. Interacts with host CGAS. In terms of processing, highly phosphorylated in the host cell. Packaging is selective for underphosphorylated forms.

The protein localises to the virion tegument. The protein resides in the host cytoplasm. It is found in the host nucleus. Its subcellular location is the host Golgi apparatus. Tegument protein that plays different roles during the time course of infection. Participates in both the accumulation of viral mRNAs and viral protein translation at late time of infection. Modulates the RNase activity of the virion host shutoff protein UL41 probably to ensure necessary levels of key cellular mRNAs and proteins. Plays a role in microtubule reorganization that occurs after viral infection by stabilizing microtubule network. Plays a role in the inhibition of host innate immune system by targeting the CGAS enzymatic activity which is the principal cytosolic DNA sensor that detects invading viral DNA. Acts by mediating disruption of liquid-like droplets in which CGAS is activated, thereby preventing CGAS activity. This Amazona oratrix (yellow-headed parrot) protein is Tegument protein VP22 (UL49).